We begin with the raw amino-acid sequence, 701 residues long: CRS2-associated factor 1, chloroplastic (701 aa).

The transit peptide at 1–37 (MSLKLNTPFPIFAPSLFPNHNPRAPSEIRFSRWGNAN) directs the protein to the chloroplast. Disordered stretches follow at residues 68–136 (VHTH…PEVK) and 191–221 (LPQS…QKPG). 2 consecutive CRM domains span residues 241 to 337 (EPLT…TRPR) and 359 to 455 (EGLT…LTTP). Residues 471-532 (LPEDDEPSVS…SLQSWSTKDV (62 aa)) form a disordered region. 2 stretches are compositionally biased toward polar residues: residues 479-492 (VSPN…QNPP) and 520-530 (TINSLQSWSTK). Residues 564 to 586 (RVLILMKQAVESGTALVLDAADL) are CRS2 binding.

In terms of assembly, interacts with CRS2 and RNA. Part of large ribonucleo-protein complexes that include group IIB introns, CRS2 and CAF1.

It is found in the plastid. The protein resides in the chloroplast stroma. In terms of biological role, required for the splicing of group IIB introns in chloroplasts. Forms splicing particles with CRS2. Interacts with RNA and confers intron specificity of the splicing particles. In Arabidopsis thaliana (Mouse-ear cress), this protein is CRS2-associated factor 1, chloroplastic.